A 149-amino-acid polypeptide reads, in one-letter code: Large ribosomal subunit protein bL9 (149 aa).

It belongs to the bacterial ribosomal protein bL9 family.

In terms of biological role, binds to the 23S rRNA. In Aquifex aeolicus (strain VF5), this protein is Large ribosomal subunit protein bL9.